The sequence spans 478 residues: Glutamate--tRNA ligase (478 aa).

The short motif at 9-19 (PSPTGLLHIGT) is the 'HIGH' region element. Residues 248–252 (KLSKR) carry the 'KMSKS' region motif. Lysine 251 serves as a coordination point for ATP.

The protein belongs to the class-I aminoacyl-tRNA synthetase family. Glutamate--tRNA ligase type 1 subfamily. Monomer.

Its subcellular location is the cytoplasm. It catalyses the reaction tRNA(Glu) + L-glutamate + ATP = L-glutamyl-tRNA(Glu) + AMP + diphosphate. In terms of biological role, catalyzes the attachment of glutamate to tRNA(Glu) in a two-step reaction: glutamate is first activated by ATP to form Glu-AMP and then transferred to the acceptor end of tRNA(Glu). The sequence is that of Glutamate--tRNA ligase from Prochlorococcus marinus (strain MIT 9515).